A 250-amino-acid polypeptide reads, in one-letter code: MGQKSNPNGLRLGIIRTWESKWYDVDKKVPFLVGEDFKIRTLIKNNYPKSTISQIEIKRLKKSNDEFIEIDLYTSKIGIIQGPENKNKNSLINKIEKLINKKVQINIFEVKAINKIAVLVAQNIAIQLQQRAFYKAVLKSAIQKALKSGIKGIKIIITGRLGGAEKARRDSISMGVVPLNTLRADIDYAFEEAHTTYGVLGVKVIINHGEVLPNKTIADTRQIFSSQYENKKNNNKRHFVDKKNFKKSTS.

Residues 39–111 (IRTLIKNNYP…KVQINIFEVK (73 aa)) enclose the KH type-2 domain.

The protein belongs to the universal ribosomal protein uS3 family. Part of the 30S ribosomal subunit. Forms a tight complex with proteins S10 and S14.

Its function is as follows. Binds the lower part of the 30S subunit head. Binds mRNA in the 70S ribosome, positioning it for translation. The sequence is that of Small ribosomal subunit protein uS3 from Alder yellows phytoplasma.